The primary structure comprises 280 residues: MKQVFGVFGDPIAHSLSPAMHNAAFSALGMDCIYHAFRVKPEKLEKAILGAEAMGFGGLNLTVPLKETALKLDCIKPDPLAEKIGAVNTIVFGETGEIKGYNTDGLGAKQALQNSAVEMEGSKIVVTGAGGAARSIAFQLAADGAEITIVNRTEGRAIELAKDISAASLSGNVTGKGLSGLKNLLQDANILINTTTLGMHPNVDTAIATAEDLHPDLTVFDIVYNPLETRLLREAKASGAKTVSGVLMLVYQGAEAFKLWTGIEPPVELMKKTVLEALQV.

Residues 15-17 and threonine 62 contribute to the shikimate site; that span reads SLS. Catalysis depends on lysine 66, which acts as the Proton acceptor. Shikimate-binding residues include asparagine 88 and aspartate 104. NADP(+) contacts are provided by residues 128-132, 151-156, and isoleucine 222; these read GAGGA and NRTEGR. A shikimate-binding site is contributed by tyrosine 224. Glycine 245 contributes to the NADP(+) binding site.

This sequence belongs to the shikimate dehydrogenase family. As to quaternary structure, homodimer.

It catalyses the reaction shikimate + NADP(+) = 3-dehydroshikimate + NADPH + H(+). It participates in metabolic intermediate biosynthesis; chorismate biosynthesis; chorismate from D-erythrose 4-phosphate and phosphoenolpyruvate: step 4/7. Involved in the biosynthesis of the chorismate, which leads to the biosynthesis of aromatic amino acids. Catalyzes the reversible NADPH linked reduction of 3-dehydroshikimate (DHSA) to yield shikimate (SA). The protein is Shikimate dehydrogenase (NADP(+)) of Methanosarcina barkeri (strain Fusaro / DSM 804).